The sequence spans 649 residues: Protein WHI4 (649 aa).

Serine 22 and serine 206 each carry phosphoserine. Disordered stretches follow at residues 196–217 (EHVSSGTTNSSPKNYQLSSSAQ) and 228–247 (ISYGKTSSSPLGPSAAKPRP). The span at 228–238 (ISYGKTSSSPL) shows a compositional bias: polar residues. Phosphoserine is present on residues serine 258 and serine 283. Disordered regions lie at residues 438–461 (LDLNLQTENGHPQSSAPNGSSIFN) and 604–649 (QLPH…YGKS). In terms of domain architecture, RRM spans 533-625 (NTLYVGNLPP…GGIRLSFSKN (93 aa)). A compositionally biased stretch (polar residues) spans 631–649 (GSNSRSKSGYSFNGSYGKS).

In terms of processing, phosphorylated by PKA in vitro.

It localises to the cytoplasm. In terms of biological role, has a partially redundant function to WHI3, a dosage-dependent modulator of cell size. The protein is Protein WHI4 (WHI4) of Saccharomyces cerevisiae (strain ATCC 204508 / S288c) (Baker's yeast).